A 461-amino-acid chain; its full sequence is Inositol-trisphosphate 3-kinase A (461 aa).

Residues 1 to 29 are disordered; that stretch reads MTLPGGPTGMARPGGARPCSPGLERAPRR. Residues 1 to 133 form a required for cytoskeleton location region; it reads MTLPGGPTGM…SVSSTGSSSL (133 aa). An omega-N-methylarginine mark is found at Arg35, Arg55, and Arg62. A disordered region spans residues 49–160; the sequence is AAAGEPRARG…GNVQLEAGED (112 aa). The segment covering 118-134 has biased composition (low complexity); it reads RRLSTSSVSSTGSSSLL. A phosphoserine mark is found at Ser137 and Ser197. Residues Ser197, Lys209, 249–251, and Asp262 each bind ATP; that span reads QDL. Substrate-binding residues include Lys264 and Arg285. The calmodulin-binding stretch occupies residues 287–295; sequence DMYKKMLAV. 312–319 serves as a coordination point for substrate; the sequence is KPRYMQWR. 2 residues coordinate ATP: Lys336 and Asp416. Lys419 contacts substrate.

Belongs to the inositol phosphokinase (IPK) family. As to expression, expressed in brain.

Its subcellular location is the cytoplasm. It localises to the cytoskeleton. It catalyses the reaction 1D-myo-inositol 1,4,5-trisphosphate + ATP = 1D-myo-inositol 1,3,4,5-tetrakisphosphate + ADP + H(+). Its activity is regulated as follows. Activated by calcium/calmodulin. Its function is as follows. Catalyzes the phosphorylation of 1D-myo-inositol 1,4,5-trisphosphate (InsP3) into 1D-myo-inositol 1,3,4,5-tetrakisphosphate and participates to the regulation of calcium homeostasis. This Homo sapiens (Human) protein is Inositol-trisphosphate 3-kinase A.